The following is a 134-amino-acid chain: Complexin-2 (134 aa).

The tract at residues 1–114 is disordered; it reads MDFVMKQALG…CGDEDEEDEE (114 aa). Positions 15 to 85 are enriched in basic and acidic residues; it reads DMGKMLGGDE…EEKEAEEKAA (71 aa). Residues 29–84 are a coiled coil; sequence DAQKKEEERQEALRQQEDERKQKHIRMETEREKVRQQIRDKYGLKKKEEKEAEEKA.

This sequence belongs to the complexin/synaphin family. Binds to the SNARE core complex containing SNAP25, VAMP2 and STX1A. Nervous system. Present in electric organ (at protein level).

The protein localises to the cytoplasm. The protein resides in the cytosol. Its subcellular location is the presynapse. It is found in the nucleus. It localises to the perikaryon. Its function is as follows. Positively regulates a late step in synaptic vesicle exocytosis. This Narke japonica (Japanese sleeper ray) protein is Complexin-2.